A 141-amino-acid polypeptide reads, in one-letter code: MVHSQLPVAGPLRLLCALLLLPSATMIPGGLSPRSVTDPDVQEAAEFAVQEYNALSANAYYYKQLRIVEAQSQVVSGAKYYLTMELMKTKCAKTTGKPKVYKEIQNCELPPKAQQEKLTCHFQVWSRPWLGKIELTKMSCN.

Positions Met1–Met26 are cleaved as a signal peptide. A Cystatin domain is found at Gly29–Trp129. The Secondary area of contact motif lies at Gln73–Gly77. 2 disulfide bridges follow: Cys91–Cys107 and Cys120–Cys140.

This sequence belongs to the cystatin family. As to expression, expressed at a low level by the venom gland (at protein level).

The protein localises to the secreted. Inhibits various C1 cysteine proteases including cathepsin L, papain and cathepsin B. This protein has no toxic activity and its function in the venom is unknown. It may play a role as a housekeeping or regulatory protein. The chain is Cystatin from Pseudechis australis (Mulga snake).